The chain runs to 328 residues: Ferredoxin--NADP reductase (328 aa).

Residues glutamate 34, glutamine 42, tyrosine 47, valine 87, phenylalanine 120, aspartate 283, and threonine 323 each contribute to the FAD site.

The protein belongs to the ferredoxin--NADP reductase type 2 family. Homodimer. It depends on FAD as a cofactor.

It catalyses the reaction 2 reduced [2Fe-2S]-[ferredoxin] + NADP(+) + H(+) = 2 oxidized [2Fe-2S]-[ferredoxin] + NADPH. The chain is Ferredoxin--NADP reductase from Pediococcus pentosaceus (strain ATCC 25745 / CCUG 21536 / LMG 10740 / 183-1w).